The sequence spans 496 residues: MTLHVRPTDTKKLISGATGDWEVVIGLEVHAQVASNAKLFSGASTAFGGPPNDHVSLVDAAMPGMLPVINQECVAQAVRTGLGLKAQIHLTSVFDRKNYFYPDLPQGYQISQYKQPVVGEGEVIVDLPDGESIPVGIERLHLEQDAGKSIHDLSPTQSFVDLNRSGVALMEIVSRPDLRSAEEAKAYVTKLRTILRYLGTCDGDMEKGNLRADVNVSVRRPGEPFGTRCEIKNVNSIRFIGQAIETEARRQIEILEDGGSISQETRLFDPTRGETRSMRSKEEAHDYRYFPDPDLLPLVLKPEWVEELKSGLPELPDEKKARFIADYGLSPYDAGVLVAERETAAYFEQVADGGGVKRDGKAAANFVINELFGRLNKEGKDVTSSPVTPHQIGAILDLIAEGTISSKIAKDLFEIIFTEGGDPRVVVEARGLKQVTDLGAIEKVVDEIIAKNPDKVAQVLAKPTMLGWFVGQAMKASGGKANPQALNDILKAKLGI.

Belongs to the GatB/GatE family. GatB subfamily. As to quaternary structure, heterotrimer of A, B and C subunits.

It catalyses the reaction L-glutamyl-tRNA(Gln) + L-glutamine + ATP + H2O = L-glutaminyl-tRNA(Gln) + L-glutamate + ADP + phosphate + H(+). The enzyme catalyses L-aspartyl-tRNA(Asn) + L-glutamine + ATP + H2O = L-asparaginyl-tRNA(Asn) + L-glutamate + ADP + phosphate + 2 H(+). Its function is as follows. Allows the formation of correctly charged Asn-tRNA(Asn) or Gln-tRNA(Gln) through the transamidation of misacylated Asp-tRNA(Asn) or Glu-tRNA(Gln) in organisms which lack either or both of asparaginyl-tRNA or glutaminyl-tRNA synthetases. The reaction takes place in the presence of glutamine and ATP through an activated phospho-Asp-tRNA(Asn) or phospho-Glu-tRNA(Gln). This is Aspartyl/glutamyl-tRNA(Asn/Gln) amidotransferase subunit B from Xanthobacter autotrophicus (strain ATCC BAA-1158 / Py2).